The sequence spans 904 residues: Disks large homolog 1 (904 aa).

Residues 4–64 (RKQDTQRALH…FYEVTLLDNP (61 aa)) enclose the L27 domain. At Thr-115 the chain carries Phosphothreonine. Phosphoserine occurs at positions 122, 138, and 158. The interval 162 to 212 (PTEAVLPSPPTVPVIPVLPVPAENTVILPTIPQANPPPVLVNTDSLETPTY) is interaction with SH3 domains. PDZ domains are found at residues 224-310 (EITL…VKRR), 319-405 (EIKL…VAKP), and 466-546 (KVVL…AQYR). Residues 224–546 (EITLERGNSG…QAVTIVAQYR (323 aa)) form a required for interaction with MARCHF2 region. Ser-232 is modified (phosphoserine). Tyr-399 bears the Phosphotyrosine mark. Phosphoserine is present on residues Ser-568, Ser-573, Ser-575, Ser-579, Ser-598, Ser-619, Ser-676, Ser-684, Ser-687, Gln-709, and Ser-834. The 71-residue stretch at 581-651 (KRSLYVRALF…PSKRRVEKKE (71 aa)) folds into the SH3 domain. The interval 662–693 (SKTRDKGEIPDDMGSKGLKHVTSNASDSESSY) is disordered. A compositionally biased stretch (polar residues) spans 682-693 (VTSNASDSESSY). Positions 714–889 (TRPVIILGPM…IYNQVKQIIE (176 aa)) constitute a Guanylate kinase-like domain.

This sequence belongs to the MAGUK family. Homotetramer. Interacts (via guanylate kinase-like domain) with DLGAP1, DLGAP2, DLGAP3, DLGAP4 and MAP1A. Interacts (via guanylate kinase-like domain) with KIF13B. May interact with HTR2A. Interacts (via PDZ domains) with GRIA1. Interacts (via PDZ domains) with GRIN2A. Interacts (via PDZ domains) with KCND2 and KCND3. Interacts (via PDZ domains) with KCNA1, KCNA2, KCNA3 and KCNA4. Interacts (via PDZ domains) with ADGRA3. Interacts with KCNF1. Interacts with CAMK2. Interacts with cytoskeleton-associated protein EPB41. Interacts with cytoskeleton-associated protein EZR. Found in a complex with KCNA5 and CAV3. Found in a complex with APC and CTNNB1. Interacts (via PDZ domains) with APC. Interacts with CDH1 through binding to PIK3R1. Forms multiprotein complexes with CASK, LIN7A, LIN7B, LIN7C, APBA1, and KCNJ12. Interacts with TOPK. Forms a tripartite complex composed of DLG1, MPP7 and LIN7 (LIN7A or LIN7C). May interact with TJAP1. Interacts with PTEN. Interacts with FRMPD4 (via C-terminus). Interacts with LRFN1, LRFN2 and LRFN4. Interacts with SFPQ. Interacts (via PDZ domains) with ADGRA2 (via PDZ-binding motif). Interacts with ADAM10; this interaction recruits ADAM10 to the cell membrane during long-term depression in hippocampal neurons. Interacts with DGKI (via PDZ-binding motif). Interacts (via PDZ domains) with MARCHF2 (via PDZ domain); the interaction leads to DLG1 ubiqtuitination and degradation. Interacts (via N-terminus) with MPP3; this interaction connects CADM1 with DLG1 and links CADM1 with the regulatory subunit of phosphoinositide-3-kinase (PI3K) by forming a multiprotein complex and participates in cell spreading. In terms of assembly, (Microbial infection) Interacts with HTLV-1 protein Tax. As to quaternary structure, (Microbial infection) Interacts (via PDZ domains 1 and 2) with influenza A virus protein NS1; the interaction results in the translocation of DLG1 from the cell membrane to perinuclear puncta. Acts as a scaffold protein to facilitate the interaction between LIN7C and influenza A virus protein NS1; the interaction facilitates translocation of LIN7C to cytoplasmic puncta. (Microbial infection) Interacts with human papillomavirus 18/HPV-18 protein E6. In terms of processing, phosphorylated by MAPK12. Phosphorylation of Ser-232 regulates association with GRIN2A. Post-translationally, ubiquitinated; by MARCHF2 which results in its degradation. Abundantly expressed in atrial myocardium (at protein level). Expressed in lung fibroblasts, cervical epithelial and B-cells (at protein level). Expressed in the brain (at protein level). Widely expressed, with isoforms displaying different expression profiles.

The protein localises to the cell membrane. Its subcellular location is the basolateral cell membrane. It localises to the endoplasmic reticulum membrane. It is found in the postsynaptic density. The protein resides in the synapse. The protein localises to the sarcolemma. Its subcellular location is the apical cell membrane. It localises to the cell junction. It is found in the cytoplasm. Its function is as follows. Essential multidomain scaffolding protein required for normal development. Recruits channels, receptors and signaling molecules to discrete plasma membrane domains in polarized cells. Promotes epithelial cell layer barrier function via maintaining cell-cell adhesion. May also play a role in adherens junction assembly, signal transduction, cell proliferation, synaptogenesis and lymphocyte activation. Regulates the excitability of cardiac myocytes by modulating the functional expression of Kv4 channels. Functional regulator of Kv1.5 channel. During long-term depression in hippocampal neurons, it recruits ADAM10 to the plasma membrane. The protein is Disks large homolog 1 of Homo sapiens (Human).